The primary structure comprises 326 residues: ATP-dependent 6-phosphofructokinase 2 (326 aa).

Position 14 (Gly14) interacts with ATP. Residue 24–28 (RAVTR) participates in ADP binding. Residues 75 to 76 (RC) and 105 to 108 (GDGS) contribute to the ATP site. Residue Asp106 participates in Mg(2+) binding. 129 to 131 (TID) is a binding site for substrate. Catalysis depends on Asp131, which acts as the Proton acceptor. Residue Arg158 coordinates ADP. Residues Arg166 and 173–175 (MGR) contribute to the substrate site. ADP-binding positions include 189–191 (GAE), Lys215, and 217–219 (KNS). Residues Glu226, Arg250, and 256–259 (HLQR) each bind substrate.

Belongs to the phosphofructokinase type A (PFKA) family. ATP-dependent PFK group I subfamily. Prokaryotic clade 'B1' sub-subfamily. As to quaternary structure, homotetramer. It depends on Mg(2+) as a cofactor.

Its subcellular location is the cytoplasm. It carries out the reaction beta-D-fructose 6-phosphate + ATP = beta-D-fructose 1,6-bisphosphate + ADP + H(+). Its pathway is carbohydrate degradation; glycolysis; D-glyceraldehyde 3-phosphate and glycerone phosphate from D-glucose: step 3/4. With respect to regulation, allosterically activated by ADP and other diphosphonucleosides, and allosterically inhibited by phosphoenolpyruvate. Functionally, catalyzes the phosphorylation of D-fructose 6-phosphate to fructose 1,6-bisphosphate by ATP, the first committing step of glycolysis. The chain is ATP-dependent 6-phosphofructokinase 2 from Bacteroides thetaiotaomicron (strain ATCC 29148 / DSM 2079 / JCM 5827 / CCUG 10774 / NCTC 10582 / VPI-5482 / E50).